Reading from the N-terminus, the 300-residue chain is Enoyl-CoA hydratase domain-containing protein 3, mitochondrial (300 aa).

The transit peptide at 1-66 (MALVAGLRAF…RNIVLSNPRR (66 aa)) directs the protein to the mitochondrion. A disordered region spans residues 32-54 (SPGSARPAGPESEPRLTSTRQQD). Lysine 110 is modified (N6-succinyllysine).

The protein belongs to the enoyl-CoA hydratase/isomerase family.

The protein resides in the mitochondrion. Its function is as follows. May play a role in fatty acid biosynthesis and insulin sensitivity. This Rattus norvegicus (Rat) protein is Enoyl-CoA hydratase domain-containing protein 3, mitochondrial.